A 582-amino-acid chain; its full sequence is Glutaredoxin domain-containing cysteine-rich protein CG12206 (582 aa).

Residues 217-227 show a composition bias toward polar residues; the sequence is CETLDSGTGSD. Disordered regions lie at residues 217–244 and 260–300; these read CETL…VRSP and EADH…SCDS. Positions 291 to 300 are enriched in low complexity; sequence SSNSSLSCDS. Positions 423-528 constitute a Glutaredoxin domain; it reads NVKNYMEKDV…QLLRPYKSIA (106 aa).

It belongs to the GRXCR1 family.

In Drosophila melanogaster (Fruit fly), this protein is Glutaredoxin domain-containing cysteine-rich protein CG12206.